Here is a 401-residue protein sequence, read N- to C-terminus: Chalcone synthase 6 (401 aa).

C168 is an active-site residue.

This sequence belongs to the thiolase-like superfamily. Chalcone/stilbene synthases family.

It carries out the reaction (E)-4-coumaroyl-CoA + 3 malonyl-CoA + 3 H(+) = 2',4,4',6'-tetrahydroxychalcone + 3 CO2 + 4 CoA. It functions in the pathway secondary metabolite biosynthesis; flavonoid biosynthesis. In terms of biological role, the primary product of this enzyme is 4,2',4',6'-tetrahydroxychalcone (also termed naringenin-chalcone or chalcone) which can under specific conditions spontaneously isomerize into naringenin. The polypeptide is Chalcone synthase 6 (CHS6) (Sorghum bicolor (Sorghum)).